Consider the following 113-residue polypeptide: Na(+)/H(+) antiporter subunit C1 (113 aa).

A run of 3 helical transmembrane segments spans residues 1–21, 28–48, and 72–92; these read MEIIMIFVCGILASISVYLVL, IVMGTTLITHASNLFLITMGG, and LILTAIVIAFATTAFFLVLAF.

The protein belongs to the CPA3 antiporters (TC 2.A.63) subunit C family. In terms of assembly, may form a heterooligomeric complex that consists of seven subunits: mnhA1, mnhB1, mnhC1, mnhD1, mnhE1, mnhF1 and mnhG1.

The protein resides in the cell membrane. Its function is as follows. Mnh complex is a Na(+)/H(+) antiporter involved in Na(+) excretion. In Staphylococcus haemolyticus (strain JCSC1435), this protein is Na(+)/H(+) antiporter subunit C1 (mnhC1).